A 424-amino-acid chain; its full sequence is Tyrosine--tRNA ligase (424 aa).

Residue Tyr37 coordinates L-tyrosine. A 'HIGH' region motif is present at residues 42 to 51 (PTADSLHLGH). Position 144 is an N6-acetyllysine (Lys144). L-tyrosine is bound by residues Tyr175 and Gln179. Positions 235–239 (KFGKT) match the 'KMSKS' region motif. Lys238 serves as a coordination point for ATP. Residues 357–414 (ADLMQALVDSELQPSRGQARKTIASNAITINGEKQSDPEYFFKEEDRLFGRFTLLRRG) form the S4 RNA-binding domain.

It belongs to the class-I aminoacyl-tRNA synthetase family. TyrS type 1 subfamily. In terms of assembly, homodimer.

The protein resides in the cytoplasm. It carries out the reaction tRNA(Tyr) + L-tyrosine + ATP = L-tyrosyl-tRNA(Tyr) + AMP + diphosphate + H(+). Catalyzes the attachment of tyrosine to tRNA(Tyr) in a two-step reaction: tyrosine is first activated by ATP to form Tyr-AMP and then transferred to the acceptor end of tRNA(Tyr). In Escherichia coli O127:H6 (strain E2348/69 / EPEC), this protein is Tyrosine--tRNA ligase.